The following is a 1107-amino-acid chain: Ubiquitin-associated protein 2-like (1107 aa).

Met-1 carries the N-acetylmethionine modification. The disordered stretch occupies residues 1-33; that stretch reads MMTSVGTNRARGNWEQPQNQNQTQHKQRPQATA. The UBA domain occupies 49–89; that stretch reads DFEEKVKQLIDITGKNQDECVIALHDCNGDVNRAINVLLEG. The tract at residues 92–229 is disordered; it reads DTHSWEMVGK…NTWNNTGHFE (138 aa). Basic and acidic residues predominate over residues 118 to 132; that stretch reads EEGKENRDRDRDYSR. Basic residues predominate over residues 133–145; the sequence is RRGGPPRRGRGAS. Asymmetric dimethylarginine occurs at positions 187 and 190. Low complexity predominate over residues 213–226; that stretch reads NYGNSSGNTWNNTG. Residues Ser-376, Ser-380, and Ser-436 each carry the phosphoserine modification. Position 445 is a phosphothreonine (Thr-445). Disordered regions lie at residues 461–513, 550–676, and 689–814; these read AVAT…KKTS, SDYE…IPSL, and ANQH…LPPG. Ser-474, Ser-487, Ser-490, Ser-491, and Ser-497 each carry phosphoserine. 2 stretches are compositionally biased toward low complexity: residues 494 to 505 and 554 to 589; these read QSSSPQPAQQKL and STPTTSASSSQAPSSLYTSTASESSSTVSSNQSQES. Polar residues predominate over residues 590–656; sequence GYQSGPIQST…TQLQTTQSVE (67 aa). A phosphoserine mark is found at Ser-624, Ser-625, Ser-628, and Ser-629. The span at 665–675 shows a compositional bias: low complexity; the sequence is SESPSTSSIPS. Polar residues predominate over residues 689 to 713; sequence ANQHSSSLSGLSHTEEIPNTTTTQH. Residues 714–804 show a composition bias toward low complexity; it reads SSALSTQQNT…STRSSVATTS (91 aa). A phosphoserine mark is found at Ser-872 and Ser-879. Disordered stretches follow at residues 885-921 and 1060-1107; these read FGRGDASSPAPATTLAQPQQNQTQTHHTTQQTFLNPA and QQPH…WGAN. Low complexity-rich tracts occupy residues 893–916 and 1073–1087; these read PAPATTLAQPQQNQTQTHHTTQQT and QDGQTGSGQRSQTSS. Polar residues predominate over residues 1088–1107; that stretch reads IPQKPQTNKSAYNSYSWGAN.

Interacts with BMI1. Part of a complex consisting of UBAP2L, BMI1 and RNF2. Interacts with G3BP1 (via NTF2 domain); promoting stress granule formation.

The protein localises to the nucleus. Its subcellular location is the chromosome. The protein resides in the cytoplasm. It is found in the stress granule. Its function is as follows. Recruits the ubiquitination machinery to RNA polymerase II for polyubiquitination, removal and degradation, when the transcription-coupled nucleotide excision repair (TC-NER) machinery fails to resolve DNA damage. Plays an important role in the activity of long-term repopulating hematopoietic stem cells (LT-HSCs). Is a regulator of stress granule assembly, required for their efficient formation. Required for proper brain development and neocortex lamination. The protein is Ubiquitin-associated protein 2-like of Mus musculus (Mouse).